A 158-amino-acid polypeptide reads, in one-letter code: Ribosome maturation factor RimP (158 aa).

The protein belongs to the RimP family.

The protein localises to the cytoplasm. Its function is as follows. Required for maturation of 30S ribosomal subunits. This is Ribosome maturation factor RimP from Pseudomonas fluorescens (strain Pf0-1).